The following is a 91-amino-acid chain: uncharacterized protein (91 aa).

The next 3 helical transmembrane spans lie at 9–29, 30–50, and 67–87; these read LIHA…YTAG, LGIF…VIFG, and WLGC…VLKF.

Its subcellular location is the cell membrane. This is an uncharacterized protein from Methanocaldococcus jannaschii (strain ATCC 43067 / DSM 2661 / JAL-1 / JCM 10045 / NBRC 100440) (Methanococcus jannaschii).